Consider the following 159-residue polypeptide: Keratin-associated protein 6-2 (159 aa).

A 66 X 2 AA repeats of G-[YCGS] region spans residues 11 to 147 (GYGCGYGSGY…SYYRSGCCGY (137 aa)).

This sequence belongs to the KRTAP type 6 family. In terms of assembly, interacts with hair keratins. As to expression, expressed in skin during two hair growth cycles. Expression restricted to the cortical cells of hair follicles, appearing first in the cortical cells processing the flat nuclei located a few cells above the dermal papilla.

In terms of biological role, in the hair cortex, hair keratin intermediate filaments are embedded in an interfilamentous matrix, consisting of hair keratin-associated proteins (KRTAP), which are essential for the formation of a rigid and resistant hair shaft through their extensive disulfide bond cross-linking with abundant cysteine residues of hair keratins. The matrix proteins include the high-sulfur and high-glycine-tyrosine keratins. This chain is Keratin-associated protein 6-2, found in Mus musculus (Mouse).